The chain runs to 288 residues: Proline iminopeptidase (288 aa).

In terms of domain architecture, AB hydrolase-1 spans 27-274; the sequence is PVIVLHGGPG…SAHMPYIEEP (248 aa). S101 serves as the catalytic Nucleophile. D240 is a catalytic residue. H267 acts as the Proton donor in catalysis.

Belongs to the peptidase S33 family. Monomer.

Its subcellular location is the cytoplasm. The enzyme catalyses Release of N-terminal proline from a peptide.. With respect to regulation, completely inhibited by p-chloromercuribenzoate (PCMB) and heavy metal salts. Partially inhibited by proline and proline derivatives with proline as the amino terminus. Enzyme inactivated by PCMB is reactivated by incubation with 2-mercaptoethanol. Releases the N-terminal proline from various substrates including at least dipeptides Pro-Pro, Pro-Gln, Pro-Trp and Pro-Tyr. Also acts on amides (Pro-beta NA) and oligopeptides including Pro-Leu-GlyNH2, Pro-Leu-Gly, Pro-Phe-Gly-Lys, Pro-Pro-Ala-OBut and Pro-Pro-Gly-(Pro-Pro-Gly)(4). Higher activity toward small peptides (up to three residues), but very low activity for longer peptides. Has no activity against p-nitrophenyl acetate, poly_L-proline, Met-Pro or amino acyl amides other than Pro-betaNA (Pyr-betaNA, Phe-betaNA, Cys-betaNA, Met-betaNA, Leu-betaNA, Ala-betaNA and Z-Gly-Pro-betaNA). This is Proline iminopeptidase (pip) from Heyndrickxia coagulans (Weizmannia coagulans).